The sequence spans 886 residues: Interference hedgehog (886 aa).

A signal peptide spans 1–20 (MTLLTSSLLLFSLLTSRLEA). The Extracellular segment spans residues 21-709 (IPVLEKSPAH…ETFNMSPMLT (689 aa)). Over residues 29-38 (AHPAHSAHPA) the composition is skewed to low complexity. The tract at residues 29-52 (AHPAHSAHPAHPAHPAHPAHPSPG) is disordered. Ig-like C2-type domains are found at residues 51-148 (PGVR…IARL), 138-238 (PLVV…ERIQ), 258-346 (PHLL…YIKV), and 352-438 (PQIV…LQVN). 4 cysteine pairs are disulfide-bonded: Cys74–Cys132, Cys179–Cys226, Cys282–Cys330, and Cys373–Cys420. Residues Asn108 and Asn215 are each glycosylated (N-linked (GlcNAc...) asparagine). The interval 432 to 475 (GTLLQVNPKQIQEPRESGGTHRPKPNQGSRQKQMYPPTPPNVTR) is disordered. Fibronectin type-III domains are found at residues 467-573 (PPTP…LQPG) and 581-676 (VPEL…TQRP). The N-linked (GlcNAc...) asparagine glycan is linked to Asn472. Heparin-binding residues include Arg503, Lys507, Lys509, and Arg547. Asn563 is a glycosylation site (N-linked (GlcNAc...) asparagine). Positions 668-697 (LKQGRTQRPKTSTTEEPTLQMGDRDTTTPS) are disordered. Polar residues predominate over residues 671-684 (GRTQRPKTSTTEEP). Residue Asn699 is glycosylated (N-linked (GlcNAc...) asparagine). The helical transmembrane segment at 710-730 (GTIGGGAVLILLLISTCFCVC) threads the bilayer. The Cytoplasmic segment spans residues 731–886 (RRRNSRSRGN…SSGSLNSVGV (156 aa)). 2 disordered regions span residues 734–768 (NSRSRGNNPNKPRMAELRDDFVPLGNCSPTKQRQR) and 781–886 (QQQQ…SVGV). Composition is skewed to low complexity over residues 829–843 (RAGGSNGSNNGNNNN) and 870–886 (SSRSENLSSGSLNSVGV).

This sequence belongs to the immunoglobulin superfamily. IHOG family. In terms of assembly, homodimer. Heterotetramer; 2 iHog chains bind 2 hh chains when facilitated by heparin, heparin is required to promote high-affinity interactions between hh and iHog.

It is found in the membrane. Its function is as follows. Mediates response to the active Hedgehog (Hh) protein signal in embryos, functioning upstream or at the level of patched (ptc). The protein is Interference hedgehog (ihog) of Drosophila melanogaster (Fruit fly).